The chain runs to 376 residues: S-adenosylmethionine synthase (376 aa).

His-14 serves as a coordination point for ATP. Asp-16 serves as a coordination point for Mg(2+). Glu-42 lines the K(+) pocket. 2 residues coordinate L-methionine: Glu-55 and Gln-98. The tract at residues 98–108 (QSPEIALGISS) is flexible loop. ATP is bound by residues 158–160 (DGK), 224–225 (RF), Asp-233, 239–240 (RK), Ala-256, and Lys-260. Residue Asp-233 participates in L-methionine binding. Lys-264 is an L-methionine binding site.

This sequence belongs to the AdoMet synthase family. As to quaternary structure, homotetramer; dimer of dimers. Mg(2+) serves as cofactor. The cofactor is K(+).

The protein resides in the cytoplasm. It carries out the reaction L-methionine + ATP + H2O = S-adenosyl-L-methionine + phosphate + diphosphate. It functions in the pathway amino-acid biosynthesis; S-adenosyl-L-methionine biosynthesis; S-adenosyl-L-methionine from L-methionine: step 1/1. Functionally, catalyzes the formation of S-adenosylmethionine (AdoMet) from methionine and ATP. The overall synthetic reaction is composed of two sequential steps, AdoMet formation and the subsequent tripolyphosphate hydrolysis which occurs prior to release of AdoMet from the enzyme. The sequence is that of S-adenosylmethionine synthase from Aquifex aeolicus (strain VF5).